The following is a 137-amino-acid chain: Large ribosomal subunit protein uL16 (137 aa).

Belongs to the universal ribosomal protein uL16 family. As to quaternary structure, part of the 50S ribosomal subunit.

Binds 23S rRNA and is also seen to make contacts with the A and possibly P site tRNAs. This chain is Large ribosomal subunit protein uL16, found in Acinetobacter baumannii (strain AB307-0294).